Reading from the N-terminus, the 511-residue chain is Xylose import ATP-binding protein XylG (511 aa).

ABC transporter domains are found at residues 6 to 244 (LEMR…VGRE) and 261 to 506 (FEAR…IGKP). An ATP-binding site is contributed by 38-45 (GENGAGKS).

This sequence belongs to the ABC transporter superfamily. Xylose importer (TC 3.A.1.2.4) family. As to quaternary structure, the complex is composed of two ATP-binding proteins (XylG), two transmembrane proteins (XylH) and a solute-binding protein (XylF).

It localises to the cell inner membrane. It catalyses the reaction D-xylose(out) + ATP + H2O = D-xylose(in) + ADP + phosphate + H(+). Functionally, part of the ABC transporter complex XylFGH involved in xylose import. Responsible for energy coupling to the transport system. This Brucella suis biovar 1 (strain 1330) protein is Xylose import ATP-binding protein XylG.